Consider the following 395-residue polypeptide: Nitrite extrusion protein (395 aa).

12 helical membrane passes run 15–35 (SLVA…QITL), 44–64 (ISLV…PLGY), 73–93 (LMFM…SIAD), 96–116 (FDLI…SIGV), 133–153 (GIYG…PVIA), 160–180 (STVQ…VLFG), 203–223 (VLWF…AFTI), 240–262 (AGLR…GFLA), 271–291 (LMFV…SPTI), 293–313 (LYTF…GTVF), 330–350 (IVSA…ASVF), and 357–377 (AIGF…VIWM).

The protein belongs to the major facilitator superfamily. Nitrate/nitrite porter (TC 2.A.1.8) family.

Its subcellular location is the cell membrane. Its function is as follows. Involved in excretion of nitrite produced by the dissimilatory reduction of nitrate. This is Nitrite extrusion protein (narK) from Bacillus subtilis (strain 168).